The primary structure comprises 137 residues: uncharacterized protein (137 aa).

One can recognise a Ubiquitin-like domain in the interval 58–135 (VHVVAKTVRP…EVNLQMFLMN (78 aa)).

The protein resides in the cytoplasm. The protein localises to the nucleus. This is an uncharacterized protein from Schizosaccharomyces pombe (strain 972 / ATCC 24843) (Fission yeast).